The chain runs to 343 residues: Melanoma-associated antigen B18 (343 aa).

Basic residues predominate over residues 1-17 (MPRGQKSKLRAREKRHQ). Residues 1–102 (MPRGQKSKLR…LGSSREAEGW (102 aa)) are disordered. The span at 67–87 (APSTTNAIAPVSCSSNEGASS) shows a compositional bias: polar residues. Over residues 88–102 (QDEKSLGSSREAEGW) the composition is skewed to basic and acidic residues. The interval 100–343 (EGWKEDPLNK…TTSSSFSHAK (244 aa)) is interaction with LNX1. Positions 107 to 306 (LNKKVVSLVH…SAFPSCYEEA (200 aa)) constitute an MAGE domain. The disordered stretch occupies residues 313-343 (RTQARAAARAHTAAMANARSRTTSSSFSHAK). The span at 316 to 333 (ARAAARAHTAAMANARSR) shows a compositional bias: low complexity. Residues 334–343 (TTSSSFSHAK) are compositionally biased toward polar residues.

As to quaternary structure, interacts with LNX1.

Its subcellular location is the cytoplasm. Functionally, may enhance ubiquitin ligase activity of RING-type zinc finger-containing E3 ubiquitin-protein ligases. Proposed to act through recruitment and/or stabilization of the Ubl-conjugating enzyme (E2) at the E3:substrate complex. This chain is Melanoma-associated antigen B18 (MAGEB18), found in Homo sapiens (Human).